Reading from the N-terminus, the 190-residue chain is Threonylcarbamoyl-AMP synthase (190 aa).

Positions 7–190 (GDAIAAAIDV…ALTGELFRQG (184 aa)) constitute a YrdC-like domain.

It belongs to the SUA5 family. TsaC subfamily.

The protein resides in the cytoplasm. It carries out the reaction L-threonine + hydrogencarbonate + ATP = L-threonylcarbamoyladenylate + diphosphate + H2O. Its function is as follows. Required for the formation of a threonylcarbamoyl group on adenosine at position 37 (t(6)A37) in tRNAs that read codons beginning with adenine. Catalyzes the conversion of L-threonine, HCO(3)(-)/CO(2) and ATP to give threonylcarbamoyl-AMP (TC-AMP) as the acyladenylate intermediate, with the release of diphosphate. The chain is Threonylcarbamoyl-AMP synthase from Escherichia coli O6:H1 (strain CFT073 / ATCC 700928 / UPEC).